A 226-amino-acid chain; its full sequence is Ribonuclease 3 (226 aa).

Residues 6–128 (INRLQRKLGY…LIGGVFLDSN (123 aa)) form the RNase III domain. E41 contributes to the Mg(2+) binding site. D45 is an active-site residue. D114 and E117 together coordinate Mg(2+). E117 is an active-site residue. The 71-residue stretch at 155–225 (DPKTRLQEYL…AEQALKKLEL (71 aa)) folds into the DRBM domain.

The protein belongs to the ribonuclease III family. As to quaternary structure, homodimer. It depends on Mg(2+) as a cofactor.

The protein resides in the cytoplasm. The catalysed reaction is Endonucleolytic cleavage to 5'-phosphomonoester.. Its function is as follows. Digests double-stranded RNA. Involved in the processing of primary rRNA transcript to yield the immediate precursors to the large and small rRNAs (23S and 16S). Processes some mRNAs, and tRNAs when they are encoded in the rRNA operon. Processes pre-crRNA and tracrRNA of type II CRISPR loci if present in the organism. In Salmonella typhi, this protein is Ribonuclease 3.